Consider the following 595-residue polypeptide: MSNELDYRPVMLLQNDISLQKYSSPNDDDAWSKYLENPMTAATKAMMRANGDDDGVAALSLLYDYYRVPKEKRIITQGSTGRCDQVKRSCSEYESDISAYESTQIMRYLNDNNSSTHEYSETHKKNSYLSLDCLLNPSKLTLTSGKLDTNGHDDFMATTCDVYEKNSLNTLFDPIHVPSPQQRWQPDSTFKEDTPEPLIFNDILRRQAESTCSEDYIPGEANRDFEYTLESPKAIHIKSGESPMAYLNKGQFYPVNLRTAEIRKCVHLTSNKVKSVVMVVFDNEKNPEEQLKRWKHWHSRQPTAKQRVIDVADYKENCNTVENIEEVAYNALSFVWNVNDEAKIFIGLNCLSTDFSSQKGVKGVPLNLQIDTYDFETGVKRLIHRAVCQIKIFCDKGAERKMRDEERKQFRRKGKCADQNNKDIKASVLPGYRGSDVTYLRPVTDMETHPVLFIPNIHYSNLQRCGVILQSVADNSDRLSLKRSSQSFPKGLEAPPSKQQTSEDSHRVLLYVRRETEEVFDALMLKTPDLKGLRNAISEKYELPEERIFRVYKKCKRGILVNMDNNIIQHYSNHVAFLLDLTDVDGKIQVTLKEL.

The segment at 29–92 (DAWSKYLENP…CDQVKRSCSE (64 aa)) is transcription activation. The 234-residue stretch at 221–454 (ANRDFEYTLE…DMETHPVLFI (234 aa)) folds into the Grh/CP2 DB domain. Residues 484 to 505 (SSQSFPKGLEAPPSKQQTSEDS) are disordered.

Belongs to the grh/CP2 family. Grainyhead subfamily.

The protein localises to the nucleus. Transcription factor playing important roles in primary neurulation and in the differentiation of stratified epithelia of both ectodermal and endodermal origin. Binds directly to the consensus DNA sequence 5'-AACCGGTT-3' acting as an activator and repressor on distinct target genes. The polypeptide is Grainyhead-like protein 3 homolog (grhl3) (Xenopus laevis (African clawed frog)).